The sequence spans 248 residues: Cell division protein FtsQ (248 aa).

Residues 1 to 4 lie on the Cytoplasmic side of the membrane; it reads MGTR. The chain crosses the membrane as a helical span at residues 5–25; it reads LRALLGVLILLVLGGAGWLFL. Residues 26-248 lie on the Periplasmic side of the membrane; the sequence is RWEPTLLPIR…RVAARAGNRR (223 aa). Residues 32-101 form the POTRA domain; the sequence is LPIRLIQIEG…DTLRVQVREY (70 aa).

This sequence belongs to the FtsQ/DivIB family. FtsQ subfamily. As to quaternary structure, part of a complex composed of FtsB, FtsL and FtsQ.

The protein resides in the cell inner membrane. Its function is as follows. Essential cell division protein. May link together the upstream cell division proteins, which are predominantly cytoplasmic, with the downstream cell division proteins, which are predominantly periplasmic. May control correct divisome assembly. This is Cell division protein FtsQ from Allochromatium vinosum (strain ATCC 17899 / DSM 180 / NBRC 103801 / NCIMB 10441 / D) (Chromatium vinosum).